The following is a 372-amino-acid chain: Neuropeptide S receptor (372 aa).

Residues 1-52 (MPANLTEGSFHANQTVPMLDSSPVACTEIVTFTEALEAEEWGSFYSSFKTEQ) lie on the Extracellular side of the membrane. Residues Asn-4 and Asn-13 are each glycosylated (N-linked (GlcNAc...) asparagine). A helical membrane pass occupies residues 53–73 (LITLWVLFVFTIVGNSVVLFS). The Cytoplasmic segment spans residues 74–82 (TWRRKRKSR). A helical transmembrane segment spans residues 83-103 (MTFFVTQLAITDSFTGLINIL). Residues 104–122 (TDIIWRFTGDFMAPDLVCR) lie on the Extracellular side of the membrane. Cys-121 and Cys-198 are oxidised to a cystine. Residues 123–143 (IVRYLQVVLLYASTYVLVSLS) form a helical membrane-spanning segment. Residues 144-165 (IDRYHAIVYPMKFLQGAEKQAK) are Cytoplasmic-facing. Residues 166–186 (VLIGIAWSLSFLFSIPTLIIF) traverse the membrane as a helical segment. Residues 187–213 (GKRTLSNGEVQCWALWPDDSYWTPYMT) lie on the Extracellular side of the membrane. A helical membrane pass occupies residues 214 to 234 (IVAFLVYFIPLTIISVIYGLV). Over 235 to 276 (IRTIWIKSKAHETVISNCSDGELCCSYNRGLISKAKIKAIKY) the chain is Cytoplasmic. The helical transmembrane segment at 277-297 (SIVIILAFICCWSPYFLFDML) threads the bilayer. At 298–313 (DNFNLLPDTKERFYAS) the chain is on the extracellular side. A helical transmembrane segment spans residues 314-334 (VIIQNLPALNSAINPLIYCIF). Residues 335 to 372 (SGSLCSPCKVQRSQDSRMTYRERSERHEMQILSKPEFI) are Cytoplasmic-facing.

This sequence belongs to the G-protein coupled receptor 1 family. Vasopressin/oxytocin receptor subfamily.

It localises to the cell membrane. Functionally, G-protein coupled receptor for neuropeptide S (NPS). Promotes mobilization of intracellular Ca(2+) stores. Inhibits cell growth in response to NPS binding. Involved in pathogenesis of asthma and other IgE-mediated diseases. The chain is Neuropeptide S receptor (Npsr1) from Rattus norvegicus (Rat).